The chain runs to 530 residues: Polyprotein pp62 (530 aa).

It belongs to the asfivirus polyprotein pp62 family. Monomer. Predominantly exists as a monomer, with very little dimers. Homodimerization seems to be linked to low pH. As to quaternary structure, homodimer; disulfide-linked. Homotrimer; disulfide-linked. Homohexamer. In terms of processing, monoubiquitinated in vitro by viral UBCv1. Specific enzymatic cleavages in vivo yield mature proteins.

The protein resides in the host cytoplasm. It localises to the host perinuclear region. The protein localises to the virion. Functionally, essential for the correct assembly and maturation of the core of the virion. In terms of biological role, component of the core shell. Binds to phosphatidylserine, which may enable the core shell binding with the inner membrane. Its function is as follows. Component of the core shell. Binds to phosphatidylserine and DNA, which may link the core shell to the inner membrane and to the viral nucleoid. Component of the core shell. The polypeptide is Polyprotein pp62 (Ornithodoros (relapsing fever ticks)).